The chain runs to 231 residues: 7-cyano-7-deazaguanine synthase (231 aa).

Residue 8–18 (LSGGLDSATAA) participates in ATP binding. 4 residues coordinate Zn(2+): C189, C197, C200, and C203.

It belongs to the QueC family. It depends on Zn(2+) as a cofactor.

The catalysed reaction is 7-carboxy-7-deazaguanine + NH4(+) + ATP = 7-cyano-7-deazaguanine + ADP + phosphate + H2O + H(+). The protein operates within purine metabolism; 7-cyano-7-deazaguanine biosynthesis. Functionally, catalyzes the ATP-dependent conversion of 7-carboxy-7-deazaguanine (CDG) to 7-cyano-7-deazaguanine (preQ(0)). The polypeptide is 7-cyano-7-deazaguanine synthase (Synechococcus elongatus (strain ATCC 33912 / PCC 7942 / FACHB-805) (Anacystis nidulans R2)).